The following is a 290-amino-acid chain: MAEITASMVKDLREKTDAPMMDCKKALTEAGGDMQKAEEILRVRFGNKAAKSAGRVAAEGVVTIAISPDGKSAAMVEVNCETDFVAKNDDFLALSAALAEMVLTQKPADVAALSALPYKNSTVEGFRTELVGKIGENMSVRRFVRLDGQGKFASYIHGGKIGVLVDVTGDEAIAKDIAMHIAASKPKSLDASGVPQDLLDTERRVAIEKAKEAGKPEAMLEKIAEGTVQKFLKEVTLLSQPFVKDDKQTVEQVLKSKNSQCHGFTMYVVGEGIEKKVSDFAAEVAAAAKV.

The involved in Mg(2+) ion dislocation from EF-Tu stretch occupies residues 82–85; sequence TDFV.

Belongs to the EF-Ts family.

It localises to the cytoplasm. Functionally, associates with the EF-Tu.GDP complex and induces the exchange of GDP to GTP. It remains bound to the aminoacyl-tRNA.EF-Tu.GTP complex up to the GTP hydrolysis stage on the ribosome. The sequence is that of Elongation factor Ts from Thiobacillus denitrificans (strain ATCC 25259 / T1).